A 141-amino-acid polypeptide reads, in one-letter code: Putative pre-16S rRNA nuclease (141 aa).

It belongs to the YqgF nuclease family.

It localises to the cytoplasm. Could be a nuclease involved in processing of the 5'-end of pre-16S rRNA. This Aliivibrio salmonicida (strain LFI1238) (Vibrio salmonicida (strain LFI1238)) protein is Putative pre-16S rRNA nuclease.